A 267-amino-acid chain; its full sequence is MHRIAVPAATGAQTAQAPVKVAARNLDFYYDKYHALKSINIEIPEKRVTALIGPSGCGKSTLLRIFNRIYALYPKMEARGEVLLDNENILSPKYPMNRLRSKVGMVFQKPVPFPMTIFENVAYGIRHHEKLSKADMQNRVEHALRQGALWDEVKDKLGQSALGLSGGQQQRLCIARAVALRPDVLLLDEPTSALDPISTSRIEQLVEELKRDYTIVIVTHNMQQAARVSDYTAFMYLGDLIEHDRTETIFSQPSKQQTEDYITGRFG.

Residues 21–262 (VAARNLDFYY…PSKQQTEDYI (242 aa)) form the ABC transporter domain. 53–60 (GPSGCGKS) provides a ligand contact to ATP.

It belongs to the ABC transporter superfamily. Phosphate importer (TC 3.A.1.7) family. In terms of assembly, the complex is composed of two ATP-binding proteins (PstB), two transmembrane proteins (PstC and PstA) and a solute-binding protein (PstS).

The protein localises to the cell inner membrane. It carries out the reaction phosphate(out) + ATP + H2O = ADP + 2 phosphate(in) + H(+). Its function is as follows. Part of the ABC transporter complex PstSACB involved in phosphate import. Responsible for energy coupling to the transport system. The sequence is that of Phosphate import ATP-binding protein PstB from Xanthomonas oryzae pv. oryzae (strain MAFF 311018).